Here is a 285-residue protein sequence, read N- to C-terminus: Shikimate dehydrogenase (NADP(+)) (285 aa).

Shikimate-binding positions include 20-22 (SIS) and serine 67. Residue lysine 71 is the Proton acceptor of the active site. Glutamate 83 contacts NADP(+). Shikimate-binding residues include asparagine 92 and aspartate 107. NADP(+)-binding positions include 129–133 (GAGGA) and methionine 227. Tyrosine 229 lines the shikimate pocket. Position 250 (glycine 250) interacts with NADP(+).

The protein belongs to the shikimate dehydrogenase family. Homodimer.

It catalyses the reaction shikimate + NADP(+) = 3-dehydroshikimate + NADPH + H(+). The protein operates within metabolic intermediate biosynthesis; chorismate biosynthesis; chorismate from D-erythrose 4-phosphate and phosphoenolpyruvate: step 4/7. Involved in the biosynthesis of the chorismate, which leads to the biosynthesis of aromatic amino acids. Catalyzes the reversible NADPH linked reduction of 3-dehydroshikimate (DHSA) to yield shikimate (SA). The sequence is that of Shikimate dehydrogenase (NADP(+)) from Streptococcus gordonii (strain Challis / ATCC 35105 / BCRC 15272 / CH1 / DL1 / V288).